The following is a 354-amino-acid chain: Ribosomal RNA large subunit methyltransferase K (354 aa).

It belongs to the methyltransferase superfamily.

The protein localises to the cytoplasm. It catalyses the reaction guanosine(2069) in 23S rRNA + S-adenosyl-L-methionine = N(2)-methylguanosine(2069) in 23S rRNA + S-adenosyl-L-homocysteine + H(+). Functionally, specifically methylates the guanine in position 2069 (m7G2069) of 23S rRNA. The sequence is that of Ribosomal RNA large subunit methyltransferase K (rlmK) from Neisseria meningitidis serogroup B (strain ATCC BAA-335 / MC58).